Consider the following 107-residue polypeptide: Thioredoxin (107 aa).

One can recognise a Thioredoxin domain in the interval 2 to 107; that stretch reads PSPIQVTDFS…TLTNALKKYL (106 aa). Residues Cys-32 and Cys-35 each act as nucleophile in the active site. Cys-32 and Cys-35 are oxidised to a cystine.

The protein belongs to the thioredoxin family.

The protein resides in the plastid. Its subcellular location is the chloroplast. In terms of biological role, participates in various redox reactions through the reversible oxidation of its active center dithiol to a disulfide and catalyzes dithiol-disulfide exchange reactions. This is Thioredoxin (trxA) from Cyanidium caldarium (Red alga).